The following is a 336-amino-acid chain: Quinolinate synthase (336 aa).

Positions 25 and 42 each coordinate iminosuccinate. Residue C86 participates in [4Fe-4S] cluster binding. Iminosuccinate contacts are provided by residues 117-119 and S138; that span reads YIN. C198 provides a ligand contact to [4Fe-4S] cluster. Iminosuccinate-binding positions include 224–226 and T241; that span reads HPE. C288 provides a ligand contact to [4Fe-4S] cluster.

It belongs to the quinolinate synthase family. Type 3 subfamily. [4Fe-4S] cluster serves as cofactor.

The protein localises to the cytoplasm. It carries out the reaction iminosuccinate + dihydroxyacetone phosphate = quinolinate + phosphate + 2 H2O + H(+). Its pathway is cofactor biosynthesis; NAD(+) biosynthesis; quinolinate from iminoaspartate: step 1/1. Catalyzes the condensation of iminoaspartate with dihydroxyacetone phosphate to form quinolinate. The protein is Quinolinate synthase of Helicobacter pylori (strain HPAG1).